Here is a 766-residue protein sequence, read N- to C-terminus: General transcription and DNA repair factor IIH helicase/translocase subunit XPB2 (766 aa).

The tract at residues 1–56 (MGNDERKRPTKKMKYGGKDDQKMKNIQNVEDYYDDADEDSRDGEGEEKRRDFTDLE) is disordered. Over residues 31–41 (DYYDDADEDSR) the composition is skewed to acidic residues. Residues 42–56 (DGEGEEKRRDFTDLE) are compositionally biased toward basic and acidic residues. The region spanning 293–455 (MFGNGRARSG…DLNFLIGPKL (163 aa)) is the Helicase ATP-binding domain. 306–313 (LPCGAGKS) is a binding site for ATP. The DEVH box motif lies at 408–411 (DEVH). Residues 510 to 676 (RACEFLIRFH…SLPPPDAGSS (167 aa)) form the Helicase C-terminal domain. Over residues 739 to 748 (SGRQKSGNQS) the composition is skewed to polar residues. The interval 739-766 (SGRQKSGNQSKKPKDPTKRHNIFKKRYV) is disordered. The Nuclear localization signal signature appears at 749–765 (KKPKDPTKRHNIFKKRY). Residues 757–766 (RHNIFKKRYV) are compositionally biased toward basic residues.

It belongs to the helicase family. RAD25/XPB subfamily. As to quaternary structure, component of the 7-subunit TFIIH core complex composed of XPB, XPD, TFB1/GTF2H1, GTF2H2/P44, TFB4/GTF2H3, TFB2/GTF2H4 and TFB5/GTF2H5, which is active in NER. The core complex associates with the 3-subunit CDK-activating kinase (CAK) module composed of CYCH1/cyclin H1, CDKD and MAT1/At4g30820 to form the 10-subunit holoenzyme (holo-TFIIH) active in transcription. As to expression, expressed ubiquitously.

The protein resides in the nucleus. It carries out the reaction Couples ATP hydrolysis with the unwinding of duplex DNA by translocating in the 3'-5' direction.. The catalysed reaction is ATP + H2O = ADP + phosphate + H(+). Functionally, ATP-dependent 3'-5' DNA helicase/translocase; binds dsDNA rather than ssDNA, unzipping it in a translocase rather than classical helicase activity. Component of the general transcription and DNA repair factor IIH (TFIIH) core complex. When complexed to CDK-activating kinase (CAK), involved in RNA transcription by RNA polymerase II. The ATPase activity of XPB/ERCC3, but not its helicase activity, is required for DNA opening; it may wrap around the damaged DNA wedging it open, causing localized melting and twisting that allows XPD/ERCC2 helicase to anchor. The ATP-dependent helicase activity of XPB/ERCC3 may be required for promoter escape. Also involved in transcription-coupled nucleotide excision repair (NER) of damaged DNA. In NER, TFIIH acts by opening DNA around the lesion to allow the excision of the damaged oligonucleotide and its replacement by a new DNA fragment. The structure of the TFIIH transcription complex differs from the NER-TFIIH complex. Partially complements UV sensitivity of a yeast SSL2 mutation. The chain is General transcription and DNA repair factor IIH helicase/translocase subunit XPB2 (XPB2) from Arabidopsis thaliana (Mouse-ear cress).